The chain runs to 829 residues: FAST kinase domain-containing protein 1, mitochondrial (829 aa).

Lys-346 carries the post-translational modification N6-acetyllysine. The RAP domain maps to 761–821 (IAIELLDVRA…KDARMDYLRE (61 aa)).

It belongs to the FAST kinase family. As to expression, expression detected in spleen, testis, colon, heart, smooth muscle, kidney, brain, lung, liver, brown and white adipose tissue with highest expression in heart and brown adipose tissue.

It localises to the mitochondrion. Involved in the down-regulation of mitochondrial MT-ND3 mRNA levels which leads to decreased respiratory complex I abundance and activity. The polypeptide is FAST kinase domain-containing protein 1, mitochondrial (Fastkd1) (Mus musculus (Mouse)).